A 255-amino-acid chain; its full sequence is 5-oxoprolinase subunit A (255 aa).

The protein belongs to the LamB/PxpA family. In terms of assembly, forms a complex composed of PxpA, PxpB and PxpC.

The enzyme catalyses 5-oxo-L-proline + ATP + 2 H2O = L-glutamate + ADP + phosphate + H(+). Its function is as follows. Catalyzes the cleavage of 5-oxoproline to form L-glutamate coupled to the hydrolysis of ATP to ADP and inorganic phosphate. The protein is 5-oxoprolinase subunit A of Thermococcus sibiricus (strain DSM 12597 / MM 739).